A 360-amino-acid polypeptide reads, in one-letter code: Glycerol-3-phosphate dehydrogenase [NAD(+)], cytoplasmic (360 aa).

NAD(+) is bound by residues 11 to 16 (GSGNWG), Phe-98, Lys-121, and Ala-155. Lys-121 contributes to the substrate binding site. Lys-206 (proton acceptor) is an active-site residue. NAD(+) contacts are provided by Arg-270 and Gln-299. Residue 270-271 (RN) participates in substrate binding.

It belongs to the NAD-dependent glycerol-3-phosphate dehydrogenase family. In terms of assembly, homodimer.

It is found in the cytoplasm. The enzyme catalyses sn-glycerol 3-phosphate + NAD(+) = dihydroxyacetone phosphate + NADH + H(+). The protein operates within phospholipid metabolism; alpha-glycerophosphate cycle. This chain is Glycerol-3-phosphate dehydrogenase [NAD(+)], cytoplasmic (Gpdh1), found in Drosophila kanekoi (Fruit fly).